A 420-amino-acid polypeptide reads, in one-letter code: MRYDVVIIGGGLAGLTCGIRLAEQGKRCAIVSAGQNALHFSSGALDLLSHLPDGQPVSQPLEALDELARQAPHHPYSRMGAAAVAALLPQVEALLERSTISLLGSYQQNHWRMTPLGKFRACWLSPVDGVTRGLPDSRFGDNPLIAGIEGFLDFQSRIVAGTLQAQGIAARSDDLKLPVLDRLRQNPSEFRAVNIARVLDRPENRAALVEELSLLANGNDAIIMPACLGLDSPEVVGELAEALGKPISLLPTLPPSVLGLRLHQALSQRFRQLGGMVMPGDRAVRASLSAQEIAVHSHHHRDIPLRAKYAVLASGSFFSNGLVTQFDRVTEPVFGLDVRFAEQREGWSQQDVFVPQPYMQFGAIVDEHLHPRIGGETIGNLYAIGAVLEGFDPIAQGCGAGVSLLSALHVAEQILKEGNL.

This sequence belongs to the anaerobic G-3-P dehydrogenase subunit B family. In terms of assembly, composed of a catalytic GlpA/B dimer and of membrane bound GlpC. FMN serves as cofactor.

The catalysed reaction is a quinone + sn-glycerol 3-phosphate = dihydroxyacetone phosphate + a quinol. Its pathway is polyol metabolism; glycerol degradation via glycerol kinase pathway; glycerone phosphate from sn-glycerol 3-phosphate (anaerobic route): step 1/1. Functionally, conversion of glycerol 3-phosphate to dihydroxyacetone. Uses fumarate or nitrate as electron acceptor. The chain is Anaerobic glycerol-3-phosphate dehydrogenase subunit B from Pectobacterium carotovorum subsp. carotovorum (strain PC1).